We begin with the raw amino-acid sequence, 341 residues long: Beta-hexosaminidase (341 aa).

Residues Asp-61, Arg-69, Arg-134, and Lys-164–His-165 each bind substrate. Catalysis depends on His-177, which acts as the Proton donor/acceptor. The active-site Nucleophile is Asp-249.

It belongs to the glycosyl hydrolase 3 family. NagZ subfamily.

Its subcellular location is the cytoplasm. It carries out the reaction Hydrolysis of terminal non-reducing N-acetyl-D-hexosamine residues in N-acetyl-beta-D-hexosaminides.. Its pathway is cell wall biogenesis; peptidoglycan recycling. Its function is as follows. Plays a role in peptidoglycan recycling by cleaving the terminal beta-1,4-linked N-acetylglucosamine (GlcNAc) from peptide-linked peptidoglycan fragments, giving rise to free GlcNAc, anhydro-N-acetylmuramic acid and anhydro-N-acetylmuramic acid-linked peptides. This is Beta-hexosaminidase from Shewanella frigidimarina (strain NCIMB 400).